The following is a 111-amino-acid chain: Large ribosomal subunit protein uL23 (111 aa).

Belongs to the universal ribosomal protein uL23 family. As to quaternary structure, part of the 50S ribosomal subunit. Contacts protein L29, and trigger factor when it is bound to the ribosome.

Functionally, one of the early assembly proteins it binds 23S rRNA. One of the proteins that surrounds the polypeptide exit tunnel on the outside of the ribosome. Forms the main docking site for trigger factor binding to the ribosome. The protein is Large ribosomal subunit protein uL23 of Chlamydia trachomatis serovar A (strain ATCC VR-571B / DSM 19440 / HAR-13).